A 348-amino-acid chain; its full sequence is Phosphate acyltransferase (348 aa).

The protein belongs to the PlsX family. As to quaternary structure, homodimer. Probably interacts with PlsY.

The protein localises to the cytoplasm. The enzyme catalyses a fatty acyl-[ACP] + phosphate = an acyl phosphate + holo-[ACP]. Its pathway is lipid metabolism; phospholipid metabolism. In terms of biological role, catalyzes the reversible formation of acyl-phosphate (acyl-PO(4)) from acyl-[acyl-carrier-protein] (acyl-ACP). This enzyme utilizes acyl-ACP as fatty acyl donor, but not acyl-CoA. The protein is Phosphate acyltransferase of Rhizobium rhizogenes (strain K84 / ATCC BAA-868) (Agrobacterium radiobacter).